We begin with the raw amino-acid sequence, 89 residues long: Small ribosomal subunit protein uS15 (89 aa).

Belongs to the universal ribosomal protein uS15 family. As to quaternary structure, part of the 30S ribosomal subunit. Forms a bridge to the 50S subunit in the 70S ribosome, contacting the 23S rRNA.

One of the primary rRNA binding proteins, it binds directly to 16S rRNA where it helps nucleate assembly of the platform of the 30S subunit by binding and bridging several RNA helices of the 16S rRNA. Its function is as follows. Forms an intersubunit bridge (bridge B4) with the 23S rRNA of the 50S subunit in the ribosome. This is Small ribosomal subunit protein uS15 from Shewanella amazonensis (strain ATCC BAA-1098 / SB2B).